A 224-amino-acid polypeptide reads, in one-letter code: Deoxyribose-phosphate aldolase (224 aa).

D92 functions as the Proton donor/acceptor in the catalytic mechanism. Catalysis depends on K154, which acts as the Schiff-base intermediate with acetaldehyde. The active-site Proton donor/acceptor is K183.

Belongs to the DeoC/FbaB aldolase family. DeoC type 1 subfamily.

The protein resides in the cytoplasm. It carries out the reaction 2-deoxy-D-ribose 5-phosphate = D-glyceraldehyde 3-phosphate + acetaldehyde. It functions in the pathway carbohydrate degradation; 2-deoxy-D-ribose 1-phosphate degradation; D-glyceraldehyde 3-phosphate and acetaldehyde from 2-deoxy-alpha-D-ribose 1-phosphate: step 2/2. Its function is as follows. Catalyzes a reversible aldol reaction between acetaldehyde and D-glyceraldehyde 3-phosphate to generate 2-deoxy-D-ribose 5-phosphate. The polypeptide is Deoxyribose-phosphate aldolase (Histophilus somni (strain 129Pt) (Haemophilus somnus)).